Consider the following 349-residue polypeptide: Very-long-chain 3-oxoacyl-CoA reductase (349 aa).

A helical transmembrane segment spans residues 29-49 (AASLVFATGGLFLLSRGLSFL). NADP(+) contacts are provided by Leu-74, Asp-129, Asp-137, Asn-156, Tyr-223, Lys-227, Val-256, and Ser-258. The active-site Proton donor is Tyr-223. Catalysis depends on Lys-227, which acts as the Lowers pKa of active site Tyr.

Belongs to the short-chain dehydrogenases/reductases (SDR) family.

It localises to the endoplasmic reticulum membrane. The enzyme catalyses a very-long-chain (3R)-3-hydroxyacyl-CoA + NADP(+) = a very-long-chain 3-oxoacyl-CoA + NADPH + H(+). It functions in the pathway lipid metabolism; fatty acid biosynthesis. In terms of biological role, component of the microsomal membrane bound fatty acid elongation system, which produces the 26-carbon very long-chain fatty acids (VLCFA) from palmitate. Catalyzes the reduction of the 3-ketoacyl-CoA intermediate that is formed in each cycle of fatty acid elongation. VLCFAs serve as precursors for ceramide and sphingolipids. This Coccidioides immitis (strain RS) (Valley fever fungus) protein is Very-long-chain 3-oxoacyl-CoA reductase.